We begin with the raw amino-acid sequence, 193 residues long: Peptidyl-tRNA hydrolase (193 aa).

Tyr16 is a tRNA binding site. The Proton acceptor role is filled by His21. Residues Phe67, Asn69, and Asn115 each coordinate tRNA.

Belongs to the PTH family. In terms of assembly, monomer.

It is found in the cytoplasm. It catalyses the reaction an N-acyl-L-alpha-aminoacyl-tRNA + H2O = an N-acyl-L-amino acid + a tRNA + H(+). Its function is as follows. Hydrolyzes ribosome-free peptidyl-tRNAs (with 1 or more amino acids incorporated), which drop off the ribosome during protein synthesis, or as a result of ribosome stalling. Functionally, catalyzes the release of premature peptidyl moieties from peptidyl-tRNA molecules trapped in stalled 50S ribosomal subunits, and thus maintains levels of free tRNAs and 50S ribosomes. The sequence is that of Peptidyl-tRNA hydrolase from Psychrobacter cryohalolentis (strain ATCC BAA-1226 / DSM 17306 / VKM B-2378 / K5).